The chain runs to 196 residues: UPF0056 membrane protein BU449 (196 aa).

6 consecutive transmembrane segments (helical) span residues 8-28 (TILL…MTIL), 45-65 (IIAL…LIIL), 71-91 (TVSI…IFPS), 105-125 (FLVP…TLML), 134-154 (MFYL…ILLS), and 174-194 (MGLV…RAWF).

It belongs to the UPF0056 (MarC) family.

The protein localises to the cell membrane. This chain is UPF0056 membrane protein BU449, found in Buchnera aphidicola subsp. Acyrthosiphon pisum (strain APS) (Acyrthosiphon pisum symbiotic bacterium).